The sequence spans 128 residues: Iron-sulfur cluster insertion protein ErpA (128 aa).

Positions 56, 120, and 122 each coordinate iron-sulfur cluster.

The protein belongs to the HesB/IscA family. Homodimer. Iron-sulfur cluster serves as cofactor.

Its function is as follows. Required for insertion of 4Fe-4S clusters for at least IspG. The protein is Iron-sulfur cluster insertion protein ErpA of Xanthomonas axonopodis pv. citri (strain 306).